The following is a 629-amino-acid chain: Coiled-coil domain-containing protein 93 (629 aa).

The disordered stretch occupies residues 1-23 (MGLPKGPEGQGLPEVETREDEEQ). The interval 1-428 (MGLPKGPEGQ…ETLKAERAPG (428 aa)) is sufficient for interaction with CCDC22. Coiled coils occupy residues 231-430 (LSAA…PGEK) and 558-599 (LRQM…LLEK). Residues Ser298, Ser301, and Ser305 each carry the phosphoserine modification. The sufficient for interaction with WASHC2C stretch occupies residues 446-629 (THNEDLDRRY…LLSKIKAKAS (184 aa)).

This sequence belongs to the CCDC93 family. In terms of assembly, component of the commander complex consisting of the CCC subcomplex and the retriever subcomplex. Component of the CCC (COMMD/CCDC22/CCDC93) subcomplex consisting of COMMD1, COMMD2, COMMD3, COMMD4, COMMD5, COMMD6, COMMD7, COMMD8, COMMD9, COMMD10, CCDC22 and CCDC93. Forms a coiled-coil heterodimer with CCDC22; this heterodimer interacts with the guanine nucleotide exchange factor DENND10; the interaction is direct. Interacts with WASHC1. Interacts directly with WASHC2C. Interacts with SNX17 and SNX31.

Its subcellular location is the early endosome. Its function is as follows. Component of the commander complex that is essential for endosomal recycling of transmembrane cargos; the commander complex is composed of composed of the CCC subcomplex and the retriever subcomplex. Component of the CCC complex, which is involved in the regulation of endosomal recycling of surface proteins, including integrins, signaling receptor and channels. The CCC complex associates with SNX17, retriever and WASH complexes to prevent lysosomal degradation and promote cell surface recycling of numerous cargos such as integrins ITGA5:ITGB1. Involved in copper-dependent ATP7A trafficking between the trans-Golgi network and vesicles in the cell periphery; the function is proposed to depend on its association within the CCC complex and cooperation with the WASH complex on early endosomes and is dependent on its interaction with WASHC2C. The protein is Coiled-coil domain-containing protein 93 (Ccdc93) of Mus musculus (Mouse).